A 228-amino-acid chain; its full sequence is DNA mismatch repair protein MutH (228 aa).

Belongs to the MutH family.

The protein localises to the cytoplasm. Functionally, sequence-specific endonuclease that cleaves unmethylated GATC sequences. It is involved in DNA mismatch repair. The sequence is that of DNA mismatch repair protein MutH from Yersinia pseudotuberculosis serotype O:1b (strain IP 31758).